Here is a 372-residue protein sequence, read N- to C-terminus: Ribosomal RNA small subunit methyltransferase H (372 aa).

S-adenosyl-L-methionine is bound by residues 78 to 80, aspartate 97, tyrosine 124, aspartate 148, and glutamine 155; that span reads GGH.

This sequence belongs to the methyltransferase superfamily. RsmH family.

The protein resides in the cytoplasm. The enzyme catalyses cytidine(1402) in 16S rRNA + S-adenosyl-L-methionine = N(4)-methylcytidine(1402) in 16S rRNA + S-adenosyl-L-homocysteine + H(+). Specifically methylates the N4 position of cytidine in position 1402 (C1402) of 16S rRNA. In Mycobacterium leprae (strain Br4923), this protein is Ribosomal RNA small subunit methyltransferase H.